A 244-amino-acid polypeptide reads, in one-letter code: Transcriptional activator protein PhzR (244 aa).

The 66-residue stretch at 177-242 folds into the HTH luxR-type domain; it reads AFNTDVEFSE…QAVSYAVALG (66 aa). Positions 201–220 form a DNA-binding region, H-T-H motif; sequence SEEIGVIMGVCTDTVNYHHR.

Belongs to the autoinducer-regulated transcriptional regulatory protein family.

Functionally, positive regulator of phenazine antibiotic production. May activate the phenazine biosynthetic genes by binding to a DNA sequence upstream of them, or to an intermediate gene which, in turn, interacts with them. The chain is Transcriptional activator protein PhzR (phzR) from Pseudomonas fluorescens.